The following is a 270-amino-acid chain: uncharacterized protein (270 aa).

H171 acts as the Proton donor in catalysis. The active-site Nucleophile is the C261.

The protein belongs to the DDAH family.

This is an uncharacterized protein from Aeropyrum pernix (strain ATCC 700893 / DSM 11879 / JCM 9820 / NBRC 100138 / K1).